The chain runs to 165 residues: Nicotine 6-hydroxylase small subunit (165 aa).

Residues Val-10–Leu-86 form the 2Fe-2S ferredoxin-type domain. Residues Cys-48, Cys-53, Cys-56, and Cys-68 each contribute to the [2Fe-2S] cluster site.

In terms of assembly, heterotrimer composed of a large subunit (NdhL), a medium subunit (NdhM) and a small subunit (NdhS). [2Fe-2S] cluster is required as a cofactor.

It is found in the cytoplasm. The catalysed reaction is (R)-nicotine + A + H2O = (R)-6-hydroxynicotine + AH2. It carries out the reaction (S)-nicotine + A + H2O = (S)-6-hydroxynicotine + AH2. The protein operates within alkaloid degradation; nicotine degradation; 6-hydroxypseudooxynicotine from nicotine (R-isomer route): step 1/2. Its pathway is alkaloid degradation; nicotine degradation; 6-hydroxypseudooxynicotine from nicotine (S-isomer route): step 1/2. Its activity is regulated as follows. Nicotine dehydrogenase activity is inhibited by tungsten. Component of the nicotine 6-hydroxylase, which is involved in the degradation of nicotine. Catalyzes the hydroxylation of the pyridine ring at C6 to form 6-hydroxynicotine. Can use both L-nicotine and D-nicotine. In Paenarthrobacter nicotinovorans (Arthrobacter nicotinovorans), this protein is Nicotine 6-hydroxylase small subunit.